An 879-amino-acid chain; its full sequence is MPTEANTYDPQRIESTAQHYWDSTHAFEVNEHSNKPKYYCLSMLPYPSGALHMGHVRNYTIGDVISRYKRMTGHNVLQPMGWDAFGLPAENAAIKNKVAPAQWTYKNIERMRTQLKSLGYAINWSREFATCQPDYYVHEQHMFTRLMRKGLAYRRNALVNWDPVDQTVLANEQVIDGRGWRSGAPVEKREIPQWFLRITDYAQELLDGLNTLDDWPEPVKTMQRNWIGRSEGLEIRFEVRDVDNNALEALRVFTTRPDTLFGVTFVSIAPEHPLALHAAKSNPGLAGLLTQMKQGGLSEAELKTQEKRGMDTGLKAIHPITNEQLPVWVANFVLMAYGTGAVMAVPGHDQRDQEFANKYGLPIRQVIALKEPKNQDESTWEPDVWRDWYADKTREFELINSAEFDGLDYQGAFEVLAERFERQGRGQRRVNYRLRDWGVSRQRYWGCPIPVIYCPTCGAVPVPENQLPVILPENVAFSGTGSPIKTDPEWRKTTCPECGGPAERETDTFDTFMESSWYYARYTSPNAREMLDKRANYWLPVDQYIGGIEHAILHLMYFRFYHKLMRDARLVDSDEPAINLLTQGMVIAETFYRKNPDGSKDWINPADVNVECDERGRITGATLISDGQPVLIGATEKMSKSKNNGVDPQIMVTKYGADTVRLFSMFAAPPEQSLEWNETGVEGMARFLRRLWTQVHHHASHGPATALDITALDTAQKAIRCKTHNTIARVEDDYGRRRSFNTAIAAVMELSNTLARFDDTTTQSHAVRQEALETMVLLLNPITPHTSHALWQTLGHPETLLEDLPFPKVDTTALVRETAILAVQINGKLRGTIEVATDAPREHIENNALTEPNTARFLEGLTVLKIIIVPGKIVNIVAR.

The short motif at 45-55 is the 'HIGH' region element; sequence PYPSGALHMGH. The 'KMSKS' region signature appears at 637-641; it reads KMSKS. K640 is a binding site for ATP.

Belongs to the class-I aminoacyl-tRNA synthetase family.

The protein resides in the cytoplasm. It carries out the reaction tRNA(Leu) + L-leucine + ATP = L-leucyl-tRNA(Leu) + AMP + diphosphate. This chain is Leucine--tRNA ligase, found in Xylella fastidiosa (strain M23).